The chain runs to 127 residues: Large ribosomal subunit protein bL17 (127 aa).

The protein belongs to the bacterial ribosomal protein bL17 family. In terms of assembly, part of the 50S ribosomal subunit. Contacts protein L32.

This is Large ribosomal subunit protein bL17 from Legionella pneumophila (strain Corby).